A 336-amino-acid chain; its full sequence is Heme A synthase (336 aa).

5 helical membrane passes run 5-25 (LTRW…VGGI), 92-112 (GRAT…KGII), 117-137 (ILSY…GWYM), 153-173 (LAFH…KLVK), and 191-211 (LIFS…GALV). His-255 lines the heme pocket. The next 3 helical transmembrane spans lie at 257–277 (LGAY…LKVK), 284–304 (VAFY…ITLL), and 307–327 (VPII…SVVI). Residue His-315 participates in heme binding.

This sequence belongs to the COX15/CtaA family. Type 2 subfamily. Interacts with CtaB. Heme b serves as cofactor.

It is found in the cell membrane. The catalysed reaction is Fe(II)-heme o + 2 A + H2O = Fe(II)-heme a + 2 AH2. It functions in the pathway porphyrin-containing compound metabolism; heme A biosynthesis; heme A from heme O: step 1/1. Catalyzes the conversion of heme O to heme A by two successive hydroxylations of the methyl group at C8. The first hydroxylation forms heme I, the second hydroxylation results in an unstable dihydroxymethyl group, which spontaneously dehydrates, resulting in the formyl group of heme A. The sequence is that of Heme A synthase from Rickettsia bellii (strain OSU 85-389).